The chain runs to 253 residues: L-cysteine S-thiosulfotransferase subunit SoxA (253 aa).

The N-terminal stretch at 1–17 (MGKWVTIIFVLFLYAIA) is a signal peptide. The Cytochrome c domain maps to 44–129 (VYAEQGRDMF…SIATYVATLS (86 aa)). Heme c contacts are provided by Cys-64, Cys-67, His-68, Cys-102, Cys-165, Cys-168, and His-169. Residue Arg-210 coordinates substrate. Cys-214 provides a ligand contact to heme c. Cys-214 serves as the catalytic Cysteine persulfide intermediate.

The protein belongs to the SoxA family. As to quaternary structure, heterodimer of SoxA and SoxX. Requires heme c as cofactor. In terms of processing, cysteine persulfide at Cys-214.

The protein localises to the periplasm. The enzyme catalyses L-cysteinyl-[SoxY protein] + thiosulfate + 2 Fe(III)-[cytochrome c] = S-sulfosulfanyl-L-cysteinyl-[SoxY protein] + 2 Fe(II)-[cytochrome c] + 2 H(+). It catalyses the reaction S-sulfanyl-L-cysteinyl-[SoxY protein] + thiosulfate + 2 Fe(III)-[cytochrome c] = S-(2-sulfodisulfanyl)-L-cysteinyl-[SoxY protein] + 2 Fe(II)-[cytochrome c] + 2 H(+). C-type diheme cytochrome, which is part of the SoxAX cytochrome complex involved in sulfur oxidation. The SoxAX complex catalyzes the formation of a heterodisulfide bond between the conserved cysteine residue on a sulfur carrier SoxYZ complex subunit SoxY and thiosulfate or other inorganic sulfur substrates. This leads to the liberation of two electrons, which may be transferred from the SoxAX complex to another cytochrome c that then channels them into the respiratory electron transport chain. Some electrons may be used for reductive CO(2) fixation. The sequence is that of L-cysteine S-thiosulfotransferase subunit SoxA from Hydrogenobacter thermophilus (strain DSM 6534 / IAM 12695 / TK-6).